The sequence spans 449 residues: Glucose-6-phosphate isomerase (449 aa).

E291 acts as the Proton donor in catalysis. Residues H312 and K426 contribute to the active site.

This sequence belongs to the GPI family.

It is found in the cytoplasm. The catalysed reaction is alpha-D-glucose 6-phosphate = beta-D-fructose 6-phosphate. It functions in the pathway carbohydrate biosynthesis; gluconeogenesis. It participates in carbohydrate degradation; glycolysis; D-glyceraldehyde 3-phosphate and glycerone phosphate from D-glucose: step 2/4. Its function is as follows. Catalyzes the reversible isomerization of glucose-6-phosphate to fructose-6-phosphate. In Streptococcus pyogenes serotype M49 (strain NZ131), this protein is Glucose-6-phosphate isomerase.